A 500-amino-acid chain; its full sequence is ATP synthase subunit alpha (500 aa).

Residue 169 to 176 (GDRQTGKT) coordinates ATP.

Belongs to the ATPase alpha/beta chains family. In terms of assembly, F-type ATPases have 2 components, CF(1) - the catalytic core - and CF(0) - the membrane proton channel. CF(1) has five subunits: alpha(3), beta(3), gamma(1), delta(1), epsilon(1). CF(0) has three main subunits: a(1), b(2) and c(9-12). The alpha and beta chains form an alternating ring which encloses part of the gamma chain. CF(1) is attached to CF(0) by a central stalk formed by the gamma and epsilon chains, while a peripheral stalk is formed by the delta and b chains.

The protein resides in the cell inner membrane. It carries out the reaction ATP + H2O + 4 H(+)(in) = ADP + phosphate + 5 H(+)(out). In terms of biological role, produces ATP from ADP in the presence of a proton gradient across the membrane. The alpha chain is a regulatory subunit. The sequence is that of ATP synthase subunit alpha from Fusobacterium nucleatum subsp. nucleatum (strain ATCC 25586 / DSM 15643 / BCRC 10681 / CIP 101130 / JCM 8532 / KCTC 2640 / LMG 13131 / VPI 4355).